Reading from the N-terminus, the 1035-residue chain is DNA polymerase catalytic subunit (1035 aa).

Belongs to the DNA polymerase type-B family.

The protein localises to the host nucleus. The enzyme catalyses DNA(n) + a 2'-deoxyribonucleoside 5'-triphosphate = DNA(n+1) + diphosphate. In Macaca mulatta (Rhesus macaque), this protein is DNA polymerase catalytic subunit (UL54).